Reading from the N-terminus, the 834-residue chain is Prominin-2 (834 aa).

The signal sequence occupies residues methionine 1–glycine 26. Topologically, residues alanine 27 to tyrosine 106 are extracellular. The helical transmembrane segment at valine 107–phenylalanine 127 threads the bilayer. The Cytoplasmic segment spans residues cysteine 128–alanine 153. Residues leucine 154–valine 174 form a helical membrane-spanning segment. The Extracellular segment spans residues threonine 175–tryptophan 426. An N-linked (GlcNAc...) asparagine glycan is attached at asparagine 270. The helical transmembrane segment at isoleucine 427–leucine 447 threads the bilayer. Over asparagine 448 to arginine 472 the chain is Cytoplasmic. The helical transmembrane segment at phenylalanine 473–phenylalanine 493 threads the bilayer. At alanine 494–asparagine 779 the chain is on the extracellular side. At serine 727 the chain carries Phosphoserine. The helical transmembrane segment at alanine 780 to valine 800 threads the bilayer. The Cytoplasmic portion of the chain corresponds to lysine 801–leucine 834. At serine 818 the chain carries Phosphoserine.

Belongs to the prominin family. In terms of assembly, binds cholesterol. Glycosylated. Present in saliva within small membrane particles (at protein level). Expressed in kidney, prostate, trachea, esophagus, salivary gland, thyroid gland, mammary gland adrenal gland, placenta, stomach, spinal cord and liver. In submucosal tumor, expressed in spindle-shaped or stellate stromal cells. Expressed in prostate cancer cell lines.

Its subcellular location is the apical cell membrane. The protein localises to the basolateral cell membrane. The protein resides in the cell projection. It is found in the microvillus membrane. It localises to the cilium membrane. The sequence is that of Prominin-2 (PROM2) from Homo sapiens (Human).